A 265-amino-acid chain; its full sequence is Tryptophan synthase alpha chain (265 aa).

Catalysis depends on proton acceptor residues glutamate 49 and aspartate 60.

Belongs to the TrpA family. In terms of assembly, tetramer of two alpha and two beta chains.

The enzyme catalyses (1S,2R)-1-C-(indol-3-yl)glycerol 3-phosphate + L-serine = D-glyceraldehyde 3-phosphate + L-tryptophan + H2O. Its pathway is amino-acid biosynthesis; L-tryptophan biosynthesis; L-tryptophan from chorismate: step 5/5. In terms of biological role, the alpha subunit is responsible for the aldol cleavage of indoleglycerol phosphate to indole and glyceraldehyde 3-phosphate. The protein is Tryptophan synthase alpha chain of Desulfatibacillum aliphaticivorans.